The chain runs to 152 residues: Histone H2B.1 (152 aa).

A compositionally biased stretch (basic and acidic residues) spans 1–23 (MAPKAEKKPAEKKPAAGEEKSAE). The tract at residues 1-60 (MAPKAEKKPAEKKPAAGEEKSAEKAPAGKKPKAEKRLPASKASSKEGGAGDKKGRKKAKK) is disordered. Residues Lys7 and Lys35 each carry the N6-acetyllysine modification. Lys148 is covalently cross-linked (Glycyl lysine isopeptide (Lys-Gly) (interchain with G-Cter in ubiquitin)).

Belongs to the histone H2B family. As to quaternary structure, the nucleosome is a histone octamer containing two molecules each of H2A, H2B, H3 and H4 assembled in one H3-H4 heterotetramer and two H2A-H2B heterodimers. The octamer wraps approximately 147 bp of DNA. Can be acetylated to form H2BK6ac and H2BK33ac. In terms of processing, monoubiquitinated by BRE1 to form H2BK143ub1 and deubiquitinated by UBP26. Required for heterochromatic histone H3 di- and trimethylation at H3K4me. May give a specific tag for epigenetic transcriptional activation.

It localises to the nucleus. Its subcellular location is the chromosome. Its function is as follows. Core component of nucleosome. Nucleosomes wrap and compact DNA into chromatin, limiting DNA accessibility to the cellular machineries which require DNA as a template. Histones thereby play a central role in transcription regulation, DNA repair, DNA replication and chromosomal stability. DNA accessibility is regulated via a complex set of post-translational modifications of histones, also called histone code, and nucleosome remodeling. The polypeptide is Histone H2B.1 (Oryza sativa subsp. indica (Rice)).